The sequence spans 163 residues: Beta-lactoglobulin-2 (163 aa).

2 disulfide bridges follow: C66–C161 and C106–C120.

Belongs to the calycin superfamily. Lipocalin family. As to quaternary structure, monomer.

The protein resides in the secreted. Lactoglobulin is the primary component of whey, it binds retinol and is probably involved in the transport of that molecule. This is Beta-lactoglobulin-2 (LGB2) from Felis catus (Cat).